Consider the following 273-residue polypeptide: Esterase pigG (273 aa).

Residues Ser-122, Asp-215, and His-243 each act as charge relay system in the active site.

Belongs to the LovG family.

The protein operates within secondary metabolite biosynthesis. Esterase; part of the gene cluster that mediates the biosynthesis of azaphilone pigments (MonAzPs), a complex mixture of compounds with a common azaphilone skeleton very widely used as food colorants. Within the pathway, pigG may assist the nrPKS pigA in the biosynthesis of the hexaketide precursor. The first step of the pathway is performed by the nrPKS pigA that forms the hexaketide precursor from successive condensations of five malonyl-CoA units, with a simple acetyl-CoA starter unit. The role of esterase pigG is not clear, but it may play at most a supplementary role in the formation of the benzaldehyde produced by the pigA nrPKS. This very reactive benzaldehyde is intercepted by the pigC ketoreductase that to provide the first stable enzyme-free MonAzPs intermediate, 6-(4-hydroxy-2-oxopentyl)-3-methyl-2,4-dioxocyclohexane carbaldehyde, also known as M7PKS-1. The FAD-dependent monooxygenase pigN hydroxylates M7PKS-1 at C-4, which triggers the formation of the pyran ring. PigJ, pigK and pigD are involved in the acetylation of the pyran ring. PigJ and pigK form the two subunits of a dedicated fungal FAS that produces the side chain fatty acyl moiety of MonAzPs and pigD transfers the fatty acyl chain to the C-4 alcohol. PigM and pigO are involved in the elimination of the omega-1 alcohol. PigM acts as an O-acetyltransferase that synthesizes the putative O-11 acetyl intermediate whereas pigO eliminates acetic acid to yield an intermediate with a C10(11) double bond. The dehydration of the C-11 alcohol followed by the reduction of the C6(7) double bond by the NAD(P)H-dependent oxidoreductase pigE increases the electrophilicity of the C-5 ketone of the resulting acyl benzopyran. This in turn sets up the C-5 ketone for an intramolecular Knoevenagel aldol condensation with the C-20 enol of the side chain. This condensation affords the characteristic linear tricyclic carbon skeletons of the yellow pigments that serve as the common precursors for the classical yellow pigments monascin and ankaflavin, orange pigments rubopunctatin and monascorubrin, and red pigments ribropunctamine and monascorubramine. The FAD-dependent oxidoreductase pigF is especially invoved in the biosynthesis of orange and red pigments via desaturation of C6(7). In Monascus ruber (Mold), this protein is Esterase pigG.